The primary structure comprises 441 residues: ATP-dependent protease ATPase subunit HslU (441 aa).

Residues Ile-18, 60–65 (GVGKTE), Asp-254, Glu-319, and Arg-391 each bind ATP.

This sequence belongs to the ClpX chaperone family. HslU subfamily. As to quaternary structure, a double ring-shaped homohexamer of HslV is capped on each side by a ring-shaped HslU homohexamer. The assembly of the HslU/HslV complex is dependent on binding of ATP.

It is found in the cytoplasm. Functionally, ATPase subunit of a proteasome-like degradation complex; this subunit has chaperone activity. The binding of ATP and its subsequent hydrolysis by HslU are essential for unfolding of protein substrates subsequently hydrolyzed by HslV. HslU recognizes the N-terminal part of its protein substrates and unfolds these before they are guided to HslV for hydrolysis. This is ATP-dependent protease ATPase subunit HslU from Shewanella denitrificans (strain OS217 / ATCC BAA-1090 / DSM 15013).